The sequence spans 485 residues: NADH-quinone oxidoreductase subunit N (485 aa).

A run of 14 helical transmembrane segments spans residues 8–28 (LIALLPLLIVGLTVVVVMLSI), 35–55 (FLNATLSVIGLNAALVSLWFV), 71–91 (GFAMLYTGLVLLASLATCTFA), 105–125 (FYLLVLIAALGGILLANANHL), 127–147 (SLFLGIELISLPLFGLVGYAF), 159–179 (YTILSAAASSFLLFGMALVYA), 203–223 (LLAGFGLMIVGLGFKLSLVPF), 235–255 (PAPVSTFLATASKIAIFGVVM), 271–291 (VVLAIIAFASIIFGNLMALSQ), 297–317 (LLGYSSISHLGYLLVALIALQ), 326–346 (VGVYLVGYLFSSLGAFGVVSL), 373–393 (AAVMTVMMLSLAGIPMTLGFI), 408–430 (WWLVGAVVVGSAIGLYYYLRVAV), and 455–475 (IVVLISALLVLVLGVWPQPLI).

Belongs to the complex I subunit 2 family. NDH-1 is composed of 13 different subunits. Subunits NuoA, H, J, K, L, M, N constitute the membrane sector of the complex.

The protein resides in the cell inner membrane. It carries out the reaction a quinone + NADH + 5 H(+)(in) = a quinol + NAD(+) + 4 H(+)(out). Its function is as follows. NDH-1 shuttles electrons from NADH, via FMN and iron-sulfur (Fe-S) centers, to quinones in the respiratory chain. The immediate electron acceptor for the enzyme in this species is believed to be ubiquinone. Couples the redox reaction to proton translocation (for every two electrons transferred, four hydrogen ions are translocated across the cytoplasmic membrane), and thus conserves the redox energy in a proton gradient. This Escherichia coli O1:K1 / APEC protein is NADH-quinone oxidoreductase subunit N.